Consider the following 98-residue polypeptide: uncharacterized protein (98 aa).

The span at 19–31 (RRMSKRSKNKAKK) shows a compositional bias: basic residues. A disordered region spans residues 19–47 (RRMSKRSKNKAKKERVPVEDRPPTPMPTS).

It belongs to the lymphocryptovirus BNLF2b family.

This is an uncharacterized protein from Homo sapiens (Human).